We begin with the raw amino-acid sequence, 90 residues long: DNA-directed RNA polymerase subunit Rpo11 (90 aa).

This sequence belongs to the archaeal Rpo11/eukaryotic RPB11/RPC19 RNA polymerase subunit family. Part of the RNA polymerase complex.

The protein localises to the cytoplasm. It catalyses the reaction RNA(n) + a ribonucleoside 5'-triphosphate = RNA(n+1) + diphosphate. DNA-dependent RNA polymerase (RNAP) catalyzes the transcription of DNA into RNA using the four ribonucleoside triphosphates as substrates. This Metallosphaera sedula (strain ATCC 51363 / DSM 5348 / JCM 9185 / NBRC 15509 / TH2) protein is DNA-directed RNA polymerase subunit Rpo11.